The following is a 422-amino-acid chain: MRLPCEVEVRSCHLPTLGLKSRGKGVRAVVSLCQAPGRNELQPEARAEPGGHACLLVSTMKDRQGTSYKLRENIEQLFTKFVDEGKATVRLKEPPVDICLSKANPGNLKTLLSAMRLAHRGCDVNTPLSTLKPVKTSEFEKYKTKMVITSKKDYPLSKNFPYFLEHLQASYCSLARVDMRMLCLKNLTKLDLSHNCIKKLPATIGDLTHLQELNLNDNQLETFSVPLCTSTLQKSLHSLDLSKNKIKALPVQFCQFRELTNLNLNDNELIHLPFKIGQLTNLRFLSAARNKLRNLPSEFKMLSLEYLDLFGNTFEKPEVIPIIKLQVPLTLLESCEQAVLFYRIPYGPDIIPYHLCQDLDTAKTCVCGRFCLQSFIQGTTTMNLHSVAHTVVLVDSMGRTEAPVVSYFCSLTCFVKSSDMLN.

LRR repeat units lie at residues 184-207 (LKNLTKLDLSHNCIKKLPATIGDL), 209-230 (HLQELNLNDNQLETFSVPLCTS), 233-258 (QKSLHSLDLSKNKIKALPVQFCQFRE), 260-279 (TNLNLNDNELIHLPFKIGQL), 280-301 (TNLRFLSAARNKLRNLPSEFKM), and 304-327 (LEYLDLFGNTFEKPEVIPIIKLQV).

As to quaternary structure, component of the probable ECS(LRR1) E3 ubiquitin-protein ligase complex which contains CUL2, RBX1, Elongin BC complex and LRR1. Interacts with CUL2, RBX1, ELOB and ELOC.

The protein resides in the nucleus. It participates in protein modification; protein ubiquitination. Its function is as follows. Substrate recognition subunit of an ECS (Elongin BC-CUL2/5-SOCS-box protein) E3 ubiquitin-protein ligase complex which mediates the ubiquitination and subsequent proteasomal degradation of target proteins. ECS(LRR1) ubiquitinates MCM7 and promotes CMG replisome disassembly by VCP and chromatin extraction during S-phase. May negatively regulate the 4-1BB-mediated signaling cascades which result in the activation of NK-kappaB and JNK1. The protein is Leucine-rich repeat protein 1 of Mus musculus (Mouse).